The following is an 83-amino-acid chain: Cytochrome b559 subunit alpha (83 aa).

The chain crosses the membrane as a helical span at residues 21 to 35 (VIHSITIPSLFIAGW). Histidine 23 provides a ligand contact to heme.

It belongs to the PsbE/PsbF family. In terms of assembly, heterodimer of an alpha subunit and a beta subunit. PSII is composed of 1 copy each of membrane proteins PsbA, PsbB, PsbC, PsbD, PsbE, PsbF, PsbH, PsbI, PsbJ, PsbK, PsbL, PsbM, PsbT, PsbX, PsbY, PsbZ, Psb30/Ycf12, at least 3 peripheral proteins of the oxygen-evolving complex and a large number of cofactors. It forms dimeric complexes. Heme b serves as cofactor.

It localises to the plastid. The protein localises to the chloroplast thylakoid membrane. Functionally, this b-type cytochrome is tightly associated with the reaction center of photosystem II (PSII). PSII is a light-driven water:plastoquinone oxidoreductase that uses light energy to abstract electrons from H(2)O, generating O(2) and a proton gradient subsequently used for ATP formation. It consists of a core antenna complex that captures photons, and an electron transfer chain that converts photonic excitation into a charge separation. The sequence is that of Cytochrome b559 subunit alpha from Adiantum capillus-veneris (Maidenhair fern).